A 481-amino-acid polypeptide reads, in one-letter code: ATP synthase subunit beta (481 aa).

160–167 contacts ATP; that stretch reads GGAGVGKT.

Belongs to the ATPase alpha/beta chains family. As to quaternary structure, F-type ATPases have 2 components, CF(1) - the catalytic core - and CF(0) - the membrane proton channel. CF(1) has five subunits: alpha(3), beta(3), gamma(1), delta(1), epsilon(1). CF(0) has three main subunits: a(1), b(2) and c(9-12). The alpha and beta chains form an alternating ring which encloses part of the gamma chain. CF(1) is attached to CF(0) by a central stalk formed by the gamma and epsilon chains, while a peripheral stalk is formed by the delta and b chains.

It localises to the cell inner membrane. It carries out the reaction ATP + H2O + 4 H(+)(in) = ADP + phosphate + 5 H(+)(out). Functionally, produces ATP from ADP in the presence of a proton gradient across the membrane. The catalytic sites are hosted primarily by the beta subunits. This Myxococcus xanthus (strain DK1622) protein is ATP synthase subunit beta.